A 1172-amino-acid polypeptide reads, in one-letter code: Thrombospondin-2 (1172 aa).

The signal sequence occupies residues 1-18; sequence MLWALALLALGIGPRASA. The 197-residue stretch at 19–215 folds into the Laminin G-like domain; that stretch reads GDHVKDTSFD…LQNVHLVFAD (197 aa). Positions 19–232 are heparin-binding; sequence GDHVKDTSFD…KKGCQHSQGA (214 aa). Residues Asn-151, Asn-316, and Asn-330 are each glycosylated (N-linked (GlcNAc...) asparagine). A VWFC domain is found at 318-375; sequence SACVQEGRIFAENETWVVDSCTTCTCKKFKTVCHQITCSPATCANPSFVEGECCPSCS. 3 TSP type-1 domains span residues 381–431, 437–492, and 494–549; these read DEGW…GKCD, NGGW…DPCP, and DGRW…RSCP. Intrachain disulfides connect Cys-393–Cys-425, Cys-397–Cys-430, Cys-408–Cys-415, Cys-449–Cys-486, Cys-453–Cys-491, Cys-464–Cys-476, Cys-506–Cys-543, Cys-510–Cys-548, Cys-521–Cys-533, Cys-553–Cys-564, Cys-558–Cys-574, Cys-577–Cys-588, Cys-594–Cys-610, Cys-601–Cys-619, Cys-622–Cys-646, Cys-652–Cys-665, Cys-659–Cys-678, Cys-680–Cys-691, Cys-707–Cys-715, Cys-720–Cys-740, Cys-756–Cys-776, Cys-779–Cys-799, Cys-815–Cys-835, Cys-838–Cys-858, Cys-876–Cys-896, Cys-912–Cys-932, and Cys-948–Cys-1169. N-linked (GlcNAc...) asparagine glycosylation is present at Asn-457. The 41-residue stretch at 549–589 folds into the EGF-like 1 domain; the sequence is PIDGCLSNPCFPGAKCNSFPDGSWSCGSCPVGFLGNGTHCE. N-linked (GlcNAc...) asparagine glycosylation occurs at Asn-584. The EGF-like 2 domain occupies 648 to 692; that stretch reads PENPCKDKTHSCHKNAECIYLGHFSDPMYKCECQIGYAGDGLICG. TSP type-3 repeat units follow at residues 693-728, 729-764, 765-787, 788-823, 824-846, 847-884, 885-920, and 921-956; these read EDSD…NSGQ, EDFD…NPRQ, LDYD…NPAQ, IDTD…NTDQ, RDTD…NPDQ, IDQD…NSNQ, ADHD…NPDQ, and EDSD…AITE. A glycan (N-linked (GlcNAc...) asparagine) is linked at Asn-710. Residues 727-752 form a disordered region; it reads GQEDFDKDGIGDACDEDDDNDGVSDE. The span at 739 to 749 shows a compositional bias: acidic residues; it reads ACDEDDDNDGV. The interval 846 to 938 is disordered; sequence QIDQDNDLVG…GDICKDDFDN (93 aa). A compositionally biased stretch (acidic residues) spans 847–866; it reads IDQDNDLVGDQCDNNEDIDD. A compositionally biased stretch (polar residues) spans 870–884; the sequence is QNNQDNCPYISNSNQ. Basic and acidic residues predominate over residues 885–895; that stretch reads ADHDNDGKGDA. Positions 896–905 are enriched in acidic residues; the sequence is CDSDDDNDGV. A compositionally biased stretch (basic and acidic residues) spans 925–935; it reads GDGRGDICKDD. The short motif at 928–930 is the Cell attachment site element; sequence RGD. Residues 960–1172 form the TSP C-terminal domain; that stretch reads RNFQMVPLDP…SDLKYECRDA (213 aa). Residue Asn-1069 is glycosylated (N-linked (GlcNAc...) asparagine).

This sequence belongs to the thrombospondin family. Homotrimer; disulfide-linked. Can bind to fibrinogen, fibronectin, laminin and type V collagen. Interacts (via the TSP type I repeats) with CD36; the interaction conveys an antiangiogenic effect. Interacts (via the TSP type I repeats) with HRG; the interaction blocks the antiangiogenic effect of THBS2 with CD36. Can bind to fibrinogen, fibronectin, laminin.

Adhesive glycoprotein that mediates cell-to-cell and cell-to-matrix interactions. Ligand for CD36 mediating antiangiogenic properties. The sequence is that of Thrombospondin-2 (Thbs2) from Mus musculus (Mouse).